We begin with the raw amino-acid sequence, 110 residues long: U1-lycotoxin-Ls1aa (110 aa).

The N-terminal stretch at Met-1–Ala-20 is a signal peptide. Residues Glu-21 to Arg-44 constitute a propeptide that is removed on maturation. 4 disulfides stabilise this stretch: Cys-47/Cys-62, Cys-54/Cys-71, Cys-61/Cys-89, and Cys-73/Cys-87.

It belongs to the neurotoxin 19 (CSTX) family. 03 subfamily. Expressed by the venom gland.

Its subcellular location is the secreted. The protein is U1-lycotoxin-Ls1aa of Lycosa singoriensis (Wolf spider).